The sequence spans 157 residues: Peptide methionine sulfoxide reductase MsrA (157 aa).

Cys13 is a catalytic residue.

It belongs to the MsrA Met sulfoxide reductase family.

It catalyses the reaction L-methionyl-[protein] + [thioredoxin]-disulfide + H2O = L-methionyl-(S)-S-oxide-[protein] + [thioredoxin]-dithiol. The catalysed reaction is [thioredoxin]-disulfide + L-methionine + H2O = L-methionine (S)-S-oxide + [thioredoxin]-dithiol. Functionally, has an important function as a repair enzyme for proteins that have been inactivated by oxidation. Catalyzes the reversible oxidation-reduction of methionine sulfoxide in proteins to methionine. In Methanococcus maripaludis (strain C7 / ATCC BAA-1331), this protein is Peptide methionine sulfoxide reductase MsrA.